A 630-amino-acid polypeptide reads, in one-letter code: Probable potassium transport system protein Kup (630 aa).

12 consecutive transmembrane segments (helical) span residues 19–39, 59–79, 108–128, 145–165, 173–193, 220–240, 255–275, 284–304, 345–365, 374–394, 405–425, and 427–447; these read GLIG…LYAV, LLSL…VLLI, WIIG…ATIT, PGLK…LFFV, VGGA…ALGL, LLAF…EALY, WLFF…ALVI, PFFF…ATIA, IYVP…VLGF, AYGI…AFVY, TVLV…SNVL, and VFDG…VMTT.

The protein belongs to the HAK/KUP transporter (TC 2.A.72) family.

The protein localises to the cell inner membrane. The enzyme catalyses K(+)(in) + H(+)(in) = K(+)(out) + H(+)(out). Its function is as follows. Transport of potassium into the cell. Likely operates as a K(+):H(+) symporter. In Acidiphilium cryptum (strain JF-5), this protein is Probable potassium transport system protein Kup.